Reading from the N-terminus, the 65-residue chain is Large ribosomal subunit protein bL35 (65 aa).

The disordered stretch occupies residues Met1–Lys23.

The protein belongs to the bacterial ribosomal protein bL35 family.

This Clostridium perfringens (strain ATCC 13124 / DSM 756 / JCM 1290 / NCIMB 6125 / NCTC 8237 / Type A) protein is Large ribosomal subunit protein bL35.